The following is a 157-amino-acid chain: SUMO-conjugating enzyme UBC9 (157 aa).

An N-acetylserine modification is found at serine 2. A UBC core domain is found at 4–157 (LCLQRLQEER…VLLQAKQYSK (154 aa)). Cysteine 93 (glycyl thioester intermediate) is an active-site residue.

Belongs to the ubiquitin-conjugating enzyme family. Interacts with SIZ1.

It localises to the nucleus. It functions in the pathway protein modification; protein sumoylation. In terms of biological role, E2 ubiquitin-like--protein ligase mediating SUMO/Smt3 attachment to septins and PCNA. Seems to be involved in degradation of S- (CLB5) and M-phase cyclins (CLB2). The chain is SUMO-conjugating enzyme UBC9 (UBC9) from Saccharomyces cerevisiae (strain ATCC 204508 / S288c) (Baker's yeast).